A 737-amino-acid chain; its full sequence is Polyribonucleotide nucleotidyltransferase (737 aa).

Mg(2+)-binding residues include D489 and D495. Residues 556–615 (PKIDTIKIDVDKIKIVIGKGGETIDKIIAETGVKIDIDEEGNVSIYSSDQDAINRAKEII) enclose the KH domain. Positions 625–693 (DEVYRAKVVR…EKGRIDASMK (69 aa)) constitute an S1 motif domain. The interval 691 to 737 (SMKALLPRPPKPEHDEKGEKSERPHRPRHQKDYKPKKEFTETSKDSE) is disordered. Residues 700 to 737 (PKPEHDEKGEKSERPHRPRHQKDYKPKKEFTETSKDSE) show a composition bias toward basic and acidic residues.

Belongs to the polyribonucleotide nucleotidyltransferase family. It depends on Mg(2+) as a cofactor.

It localises to the cytoplasm. The catalysed reaction is RNA(n+1) + phosphate = RNA(n) + a ribonucleoside 5'-diphosphate. In terms of biological role, involved in mRNA degradation. Catalyzes the phosphorolysis of single-stranded polyribonucleotides processively in the 3'- to 5'-direction. In Streptococcus pneumoniae serotype 4 (strain ATCC BAA-334 / TIGR4), this protein is Polyribonucleotide nucleotidyltransferase.